Consider the following 419-residue polypeptide: Phosphatidylinositol 5-phosphate 4-kinase type-2 gamma (419 aa).

The 373-residue stretch at 46-418 (ASDPLISVFM…RFLEFVTNIF (373 aa)) folds into the PIPK domain. Acidic residues predominate over residues 299-310 (QEEEEDLEEDHT). A disordered region spans residues 299-320 (QEEEEDLEEDHTENESSPHMNV).

In terms of processing, phosphorylated, phosphorylation is induced by EGF.

It localises to the endoplasmic reticulum. The protein resides in the cytoplasm. The catalysed reaction is a 1,2-diacyl-sn-glycero-3-phospho-(1D-myo-inositol-5-phosphate) + ATP = a 1,2-diacyl-sn-glycero-3-phospho-(1D-myo-inositol-4,5-bisphosphate) + ADP + H(+). It catalyses the reaction 1,2-dihexadecanoyl-sn-glycero-3-phospho-(1D-myo-inositol-5-phosphate) + ATP = 1,2-dihexadecanoyl-sn-glycero-3-phospho-(1D-myo-inositol-4,5-bisphosphate) + ADP + H(+). It carries out the reaction 1,2-dihexadecanoyl-sn-glycero-3-phospho-(1D-myo-inositol-5-phosphate) + GTP = 1,2-dihexadecanoyl-sn-glycero-3-phospho-(1D-myo-inositol-4,5-bisphosphate) + GDP + H(+). Its function is as follows. Phosphatidylinositol 5-phosphate 4-kinase with low enzymatic activity. May be a GTP sensor, has higher GTP-dependent kinase activity than ATP-dependent kinase activity. This chain is Phosphatidylinositol 5-phosphate 4-kinase type-2 gamma (pip4k2c), found in Xenopus tropicalis (Western clawed frog).